Here is a 173-residue protein sequence, read N- to C-terminus: Ribulose bisphosphate carboxylase small subunit, chloroplastic 5 (173 aa).

The N-terminal 49 residues, 1-49 (MASIPATVATVAQANMVAPFTGLKSNAAFPVTKKVNDFSTLPSNGGRVQ), are a transit peptide targeting the chloroplast.

The protein belongs to the RuBisCO small chain family. In terms of assembly, heterohexadecamer of 8 large and 8 small subunits.

It is found in the plastid. Its subcellular location is the chloroplast. RuBisCO catalyzes two reactions: the carboxylation of D-ribulose 1,5-bisphosphate, the primary event in carbon dioxide fixation, as well as the oxidative fragmentation of the pentose substrate. Both reactions occur simultaneously and in competition at the same active site. Although the small subunit is not catalytic it is essential for maximal activity. In Flaveria pringlei, this protein is Ribulose bisphosphate carboxylase small subunit, chloroplastic 5.